The following is a 303-amino-acid chain: N-acetyl-D-glucosamine kinase (303 aa).

Residues 4 to 11 (GFDIGGTK) and 133 to 140 (GVGGGLIF) contribute to the ATP site. Zn(2+) is bound by residues His-157, Cys-177, Cys-179, and Cys-184.

Belongs to the ROK (NagC/XylR) family. NagK subfamily.

It carries out the reaction N-acetyl-D-glucosamine + ATP = N-acetyl-D-glucosamine 6-phosphate + ADP + H(+). It participates in cell wall biogenesis; peptidoglycan recycling. Functionally, catalyzes the phosphorylation of N-acetyl-D-glucosamine (GlcNAc) derived from cell-wall degradation, yielding GlcNAc-6-P. This chain is N-acetyl-D-glucosamine kinase, found in Escherichia coli O139:H28 (strain E24377A / ETEC).